Here is a 627-residue protein sequence, read N- to C-terminus: 1-deoxy-D-xylulose-5-phosphate synthase (627 aa).

Thiamine diphosphate is bound by residues histidine 80 and 121 to 123 (GHS). Aspartate 152 provides a ligand contact to Mg(2+). Residues 153–154 (GA), asparagine 181, tyrosine 288, and glutamate 370 contribute to the thiamine diphosphate site. Position 181 (asparagine 181) interacts with Mg(2+).

It belongs to the transketolase family. DXPS subfamily. Homodimer. Mg(2+) serves as cofactor. Requires thiamine diphosphate as cofactor.

The enzyme catalyses D-glyceraldehyde 3-phosphate + pyruvate + H(+) = 1-deoxy-D-xylulose 5-phosphate + CO2. Its pathway is metabolic intermediate biosynthesis; 1-deoxy-D-xylulose 5-phosphate biosynthesis; 1-deoxy-D-xylulose 5-phosphate from D-glyceraldehyde 3-phosphate and pyruvate: step 1/1. Functionally, catalyzes the acyloin condensation reaction between C atoms 2 and 3 of pyruvate and glyceraldehyde 3-phosphate to yield 1-deoxy-D-xylulose-5-phosphate (DXP). This is 1-deoxy-D-xylulose-5-phosphate synthase from Aliivibrio fischeri (strain ATCC 700601 / ES114) (Vibrio fischeri).